The following is a 199-amino-acid chain: MAITAQMVKELREKTGAGMMECKKALETSGGDFNKAIDILRQKGLATAQKKASREAKEGIITSYIHMDKIGVMLELNCETDFVARNEEFRQLAKDIAMQIAASNPQYIQREDIPQEVIEKEKEIYKSQIKGNKPPQVIEKIVEGKLEKFFEEMCLLDQPFIKEPEKKIKDLITEKVAKFGENIMVRRFVRFQVGQTQDE.

Residues 80–83 (TDFV) form an involved in Mg(2+) ion dislocation from EF-Tu region.

Belongs to the EF-Ts family.

It localises to the cytoplasm. In terms of biological role, associates with the EF-Tu.GDP complex and induces the exchange of GDP to GTP. It remains bound to the aminoacyl-tRNA.EF-Tu.GTP complex up to the GTP hydrolysis stage on the ribosome. The polypeptide is Elongation factor Ts (Thermodesulfovibrio yellowstonii (strain ATCC 51303 / DSM 11347 / YP87)).